The chain runs to 37 residues: Large ribosomal subunit protein bL36 (37 aa).

It belongs to the bacterial ribosomal protein bL36 family.

This chain is Large ribosomal subunit protein bL36, found in Thermomicrobium roseum (strain ATCC 27502 / DSM 5159 / P-2).